A 150-amino-acid chain; its full sequence is Calmodulin (150 aa).

EF-hand domains follow at residues 9–44 (EQIAEFREAFSLFDRDQDGNITSNELGVVMRSLGQS), 45–80 (PTAAELQDMINEVDADGNGTIDFTEFLTMMARKMKD), 82–117 (DNEEEVREAFKVFDKDGNGYITVEELTHVLTSLGER), and 118–150 (LSQEEVADMIREADTDGDGVINYEEFSRVISSK). Residues D22, D24, D26, N28, E33, D58, D60, N62, T64, E69, D95, D97, N99, Y101, E106, D131, D133, D135, and E142 each contribute to the Ca(2+) site.

The protein belongs to the calmodulin family. Interacts with rng2.

Its subcellular location is the cytoplasm. It localises to the cytoskeleton. The protein localises to the microtubule organizing center. The protein resides in the spindle pole body. Calmodulin mediates the control of a large number of enzymes, ion channels and other proteins by Ca(2+). Among the enzymes to be stimulated by the calmodulin-Ca(2+) complex are a number of protein kinases and phosphatases. This Schizosaccharomyces pombe (strain 972 / ATCC 24843) (Fission yeast) protein is Calmodulin (cam1).